Reading from the N-terminus, the 317-residue chain is DNA-directed RNA polymerase subunit alpha 2 (317 aa).

An alpha N-terminal domain (alpha-NTD) region spans residues 1-227 (MALENLLHPT…NQLRNIVDIE (227 aa)). The alpha C-terminal domain (alpha-CTD) stretch occupies residues 241 to 317 (INPILLKHVE…TLIENWPQDL (77 aa)).

This sequence belongs to the RNA polymerase alpha chain family. As to quaternary structure, homodimer. The RNAP catalytic core consists of 2 alpha, 1 beta, 1 beta' and 1 omega subunit. When a sigma factor is associated with the core the holoenzyme is formed, which can initiate transcription.

The catalysed reaction is RNA(n) + a ribonucleoside 5'-triphosphate = RNA(n+1) + diphosphate. DNA-dependent RNA polymerase catalyzes the transcription of DNA into RNA using the four ribonucleoside triphosphates as substrates. The chain is DNA-directed RNA polymerase subunit alpha 2 from Francisella tularensis subsp. holarctica (strain FTNF002-00 / FTA).